Consider the following 538-residue polypeptide: Putative outer membrane porin BglH (538 aa).

An N-terminal signal peptide occupies residues 1–25 (MFRRNLITSAILLMAPLAFSAQSLA). The interval 52–82 (KDEEKKKYTPATVNRSVSTNDQGYAANPFPT) is disordered. Over residues 62-73 (ATVNRSVSTNDQ) the composition is skewed to polar residues.

This sequence belongs to the porin LamB (TC 1.B.3) family.

It is found in the cell outer membrane. May be a sugar porin with a broad carbohydrate specificity. This Escherichia coli O139:H28 (strain E24377A / ETEC) protein is Putative outer membrane porin BglH (bglH).